Here is an 879-residue protein sequence, read N- to C-terminus: Nuclear autoantigen Sp-100 (879 aa).

Alanine 2 bears the N-acetylalanine mark. Position 18 is a phosphoserine (serine 18). Residues 33–149 (DLQRMFTEDQ…IYKGFENVIH (117 aa)) form the HSR domain. The disordered stretch occupies residues 154 to 245 (LQESEEEERE…EQCAQKAEPT (92 aa)). Position 157 is a phosphoserine (serine 157). Residues 165–168 (RSGL) carry the D-box; recognition signal for CDC20-mediated degradation motif. A phosphoserine mark is found at serine 171, serine 180, and serine 228. Polar residues predominate over residues 176-200 (TGENSFRSLTWPPSGSPSHAGTTPP). The span at 207–228 (HPCETEQINAKRKDTTSDKDDS) shows a compositional bias: basic and acidic residues. The span at 229 to 238 (LGSQQTNEQC) shows a compositional bias: polar residues. Lysine 241 is covalently cross-linked (Glycyl lysine isopeptide (Lys-Gly) (interchain with G-Cter in SUMO2)). A PxVxL motif motif is present at residues 284 to 297 (IQINSCSVRLVDIK). Lysine 297 is covalently cross-linked (Glycyl lysine isopeptide (Lys-Gly) (interchain with G-Cter in SUMO)). Residues lysine 300 and lysine 306 each participate in a glycyl lysine isopeptide (Lys-Gly) (interchain with G-Cter in SUMO2) cross-link. Phosphoserine is present on residues serine 331 and serine 362. The sufficient to mediate interaction with ETS1 stretch occupies residues 333-478 (GSTDVDEPLE…SSSLRRGSGS (146 aa)). A disordered region spans residues 345–386 (ISAPRSEPVINNDNPLESNDEKEGQEATCSRPQIVPEPMDFR). Residues lysine 366 and lysine 387 each participate in a glycyl lysine isopeptide (Lys-Gly) (interchain with G-Cter in SUMO2) cross-link. 5 positions are modified to phosphoserine: serine 394, serine 407, serine 409, serine 410, and serine 451. Positions 401–596 (GQDHDFSESS…KRGPRIPKDE (196 aa)) are disordered. Residues 466–482 (ETCSSSLRRGSGSQPQE) show a composition bias toward polar residues. Positions 530–591 (SGKRRKKRRH…LKRRRKRGPR (62 aa)) are enriched in basic residues. Short sequence motifs (nuclear localization signal) lie at residues 536–553 (KRRH…RKKD) and 568–592 (KRWQ…GPRI). Lysine 594 participates in a covalent cross-link: Glycyl lysine isopeptide (Lys-Gly) (interchain with G-Cter in SUMO2). In terms of domain architecture, SAND spans 595–676 (DENINFKQSE…KVLMENKFLP (82 aa)). 2 DNA-binding regions (HMG box) span residues 677–753 (EPPS…KTYI) and 769–837 (PKRP…AAYR). The Nuclear localization signal signature appears at 717–734 (KKCSETWKTIFAKEKGKF). The tract at residues 835 to 879 (AYRAKGKPNSAKKRVVKAEKSKKKKEEEEDEEDEQEEENEEDDDK) is disordered. Basic residues predominate over residues 838–857 (AKGKPNSAKKRVVKAEKSKK). The span at 861–879 (EEEDEEDEQEEENEEDDDK) shows a compositional bias: acidic residues.

In terms of assembly, homodimer; isoforms are able to heterodimerize. Interacts with members of the HP1 family of nonhistone chromosomal protein, such as CBX5 and CBX3 via the PxVxL motif. Interacts with ETS1; the interaction is direct and modulates ETS1 transcriptional activity. Interacts with the MRN complex which is composed of two heterodimers RAD50/MRE11 associated with a single NBN; recruits the complex to PML-related bodies. Interacts with HIPK2; positively regulates TP53-dependent transcription. Interacts with CASP8AP2; may negatively regulate CASP8AP2 export from the nucleus to the cytoplasm. Interacts with SUMO1P1/SUMO5. (Microbial infection) Interacts with Epstein-Barr virus EBNA-LP; this interaction is important for EBNA-LP coactivator activity. As to quaternary structure, (Microbial infection) Interacts with human cytomegalovirus/HHV-5 protein UL123; may play a role in infection by the virus. Post-translationally, sumoylated. Sumoylation depends on a functional nuclear localization signal but is not necessary for nuclear import or nuclear body targeting. In terms of processing, sumoylated. Sumoylated with SUMO1. Sumoylation depends on a functional nuclear localization signal but is not necessary for nuclear import or nuclear body targeting. Sumoylation may stabilize the interaction with CBX5. (Microbial infection) Immediate early protein IE1 of human cytomegalovirus (HHV-5) interferes with the sumoylation of SP100. As to expression, widely expressed. Sp100-B is expressed only in spleen, tonsil, thymus, mature B-cell line and some T-cell line, but not in brain, liver, muscle or non-lymphoid cell lines.

The protein resides in the nucleus. Its subcellular location is the PML body. It localises to the nuclear body. The protein localises to the cytoplasm. Functionally, together with PML, this tumor suppressor is a major constituent of the PML bodies, a subnuclear organelle involved in a large number of physiological processes including cell growth, differentiation and apoptosis. Functions as a transcriptional coactivator of ETS1 and ETS2 according to PubMed:11909962. Under certain conditions, it may also act as a corepressor of ETS1 preventing its binding to DNA according to PubMed:15247905. Through the regulation of ETS1 it may play a role in angiogenesis, controlling endothelial cell motility and invasion. Through interaction with the MRN complex it may be involved in the regulation of telomeres lengthening. May also regulate TP53-mediated transcription and through CASP8AP2, regulate FAS-mediated apoptosis. Also plays a role in infection by viruses, including human cytomegalovirus and Epstein-Barr virus, through mechanisms that may involve chromatin and/or transcriptional regulation. This chain is Nuclear autoantigen Sp-100 (SP100), found in Homo sapiens (Human).